The sequence spans 97 residues: Large ribosomal subunit protein bL21 (97 aa).

This sequence belongs to the bacterial ribosomal protein bL21 family. As to quaternary structure, part of the 50S ribosomal subunit. Contacts protein L20.

Its function is as follows. This protein binds to 23S rRNA in the presence of protein L20. In Persephonella marina (strain DSM 14350 / EX-H1), this protein is Large ribosomal subunit protein bL21.